A 251-amino-acid polypeptide reads, in one-letter code: Triosephosphate isomerase (251 aa).

9–11 (NWK) contributes to the substrate binding site. Catalysis depends on His-95, which acts as the Electrophile. Glu-167 acts as the Proton acceptor in catalysis. Substrate is bound by residues Gly-173, Ser-212, and 233–234 (GG).

It belongs to the triosephosphate isomerase family. Homodimer.

Its subcellular location is the cytoplasm. The catalysed reaction is D-glyceraldehyde 3-phosphate = dihydroxyacetone phosphate. The protein operates within carbohydrate biosynthesis; gluconeogenesis. Its pathway is carbohydrate degradation; glycolysis; D-glyceraldehyde 3-phosphate from glycerone phosphate: step 1/1. Functionally, involved in the gluconeogenesis. Catalyzes stereospecifically the conversion of dihydroxyacetone phosphate (DHAP) to D-glyceraldehyde-3-phosphate (G3P). The protein is Triosephosphate isomerase of Pseudomonas putida (strain W619).